The primary structure comprises 206 residues: Cytochrome c (206 aa).

3 helical membrane-spanning segments follow: residues 10–30 (IALAVGGAVLMGALFFSVSFL), 49–69 (FMGWFLLIFCASIIIMGLGKM), and 76–96 (KWFLSFPLSIFVIVMVMFLSL). Heme is bound by residues Cys152, Cys155, His156, and Met182.

As to quaternary structure, monomer. Component of the photosynthetic reaction center composed of protein subunits PscA, PscC, PscB and PscD. The reaction center interacts with FmoA (which forms the Fenna-Matthews-Olson (FMO) complex). The reaction center/FmoA complex has two PscA subunits, one PscB and one PscD subunit, probably two FmoA complexes and at least one PscC subunit. Binds 1 heme group per subunit.

The protein localises to the cell inner membrane. Monoheme cytochrome which is the immediate electron donor to P840 of the photosynthetic reaction center complex. This is Cytochrome c (pscC) from Chlorobaculum tepidum (strain ATCC 49652 / DSM 12025 / NBRC 103806 / TLS) (Chlorobium tepidum).